The following is a 359-amino-acid chain: Fc receptor-like A (359 aa).

The signal sequence occupies residues 1–27; sequence MKLGCVLMAWALYLSLGVLWVAQMLLA. Ig-like C2-type domains follow at residues 70–159 and 170–257; these read PFHL…ETAS and PAPI…PQLE. Intrachain disulfides connect Cys-99–Cys-143 and Cys-192–Cys-240. The tract at residues 259–313 is disordered; the sequence is RVQGASSSAAPPTLNPAPQKSAAPGTAPEEAPGPLPPPPTPSSEDPGFSSPLGMP. The segment covering 279–288 has biased composition (low complexity); it reads SAAPGTAPEE. Residues 289-299 are compositionally biased toward pro residues; it reads APGPLPPPPTP.

As to quaternary structure, monomer or homodimer; disulfide-linked. As to expression, expressed specifically in primary and secondary lymphoid tissues like lymph node, spleen and tonsil. Specifically expressed in B-cells with a high level in normal germinal center B-cells, centroblasts and in a subset of diffuse large B-cell lymphomas. Highly expressed in bone marrow B-cells and weakly in earlier B lineage cells. Expressed in pre-germinal and germinal center B-cells in secondary lymphoid tissues. Also expressed in melanoma and melanocytes.

The protein localises to the cytoplasm. Its function is as follows. May be implicated in B-cell differentiation and lymphomagenesis. The chain is Fc receptor-like A (FCRLA) from Homo sapiens (Human).